The sequence spans 308 residues: D-alanine--D-alanine ligase (308 aa).

Residues Lys-102 to Glu-302 form the ATP-grasp domain. Pro-128 to Thr-183 serves as a coordination point for ATP. Positions 252, 269, and 271 each coordinate Mg(2+).

This sequence belongs to the D-alanine--D-alanine ligase family. The cofactor is Mg(2+). Mn(2+) serves as cofactor.

The protein localises to the cytoplasm. The enzyme catalyses 2 D-alanine + ATP = D-alanyl-D-alanine + ADP + phosphate + H(+). The protein operates within cell wall biogenesis; peptidoglycan biosynthesis. Cell wall formation. This chain is D-alanine--D-alanine ligase, found in Chelativorans sp. (strain BNC1).